Reading from the N-terminus, the 433-residue chain is CinA-like protein (433 aa).

Belongs to the CinA family.

The sequence is that of CinA-like protein from Prochlorococcus marinus (strain MIT 9515).